Reading from the N-terminus, the 648-residue chain is Forkhead box protein N1 (648 aa).

Residues Met1–Glu105 form a disordered region. Residues Glu58 to Ser67 show a composition bias toward pro residues. A DNA-binding region (fork-head) is located at residues Lys271–Asp367. Disordered regions lie at residues Leu392 to Gly445, Leu458 to Glu508, and Leu623 to Ala648. The span at Leu462–Pro473 shows a compositional bias: pro residues.

In terms of tissue distribution, expressed in thymus.

It is found in the nucleus. Functionally, transcriptional regulator which regulates the development, differentiation, and function of thymic epithelial cells (TECs) both in the prenatal and postnatal thymus. Acts as a master regulator of the TECs lineage development and is required from the onset of differentiation in progenitor TECs in the developing fetus to the final differentiation steps through which TECs mature to acquire their full functionality. Regulates, either directly or indirectly the expression of a variety of genes that mediate diverse aspects of thymus development and function, including MHC Class II, DLL4, CCL25, CTSL, CD40 and PAX1. Regulates the differentiation of the immature TECs into functional cortical TECs (cTECs) and medullary TECs (mTECs). Essential for maintenance of mTECs population in the postnatal thymus. Involved in the morphogenesis and maintenance of the three-dimensional thymic microstructure which is necessary for a fully functional thymus. Plays an important role in the maintenance of hematopoiesis and particularly T lineage progenitors within the bone marrow niche with age. Essential for the vascularization of the thymus anlage. Promotes the terminal differentiation of epithelial cells in the epidermis and hair follicles, partly by negatively regulating the activity of protein kinase C. Plays a crucial role in the early prenatal stages of T-cell ontogeny. This chain is Forkhead box protein N1 (FOXN1), found in Homo sapiens (Human).